We begin with the raw amino-acid sequence, 150 residues long: Large ribosomal subunit protein uL15 (150 aa).

Residues 1–49 are disordered; sequence MELHQLKSVSKSRNHKSKVVGRGHGSGLGKTSSRGQKGQKARKSGLTRL. Residues 10-21 show a composition bias toward basic residues; that stretch reads SKSRNHKSKVVG.

It belongs to the universal ribosomal protein uL15 family. As to quaternary structure, part of the 50S ribosomal subunit.

Binds to the 23S rRNA. The protein is Large ribosomal subunit protein uL15 of Mycoplasma genitalium (strain ATCC 33530 / DSM 19775 / NCTC 10195 / G37) (Mycoplasmoides genitalium).